The sequence spans 291 residues: START domain-containing protein 10 (291 aa).

At Met1 the chain carries N-acetylmethionine. The segment at 1-20 is disordered; sequence MEKLAASTEPQGPRPVLGRE. The region spanning 14–224 is the START domain; that stretch reads RPVLGRESVQ…MYKACLKYPE (211 aa). N6-succinyllysine is present on residues Lys94, Lys197, and Lys202. A phosphoserine mark is found at Ser253 and Ser259. The interval 260 to 291 is disordered; the sequence is LENIDESAVAESREERMGGAGGEGSDDDTSLT. The residue at position 284 (Ser284) is a Phosphoserine; by CK2. Ser289 is subject to Phosphoserine.

Phosphorylation at Ser-284 by CK2 negatively regulates lipid transfer activity, possibly by decreasing membrane association.

Its subcellular location is the cell projection. It localises to the cilium. It is found in the flagellum. The protein resides in the cytoplasm. The protein localises to the membrane. May play metabolic roles in sperm maturation or fertilization. Phospholipid transfer protein that preferentially selects lipid species containing a palmitoyl or stearoyl chain on the sn-1 and an unsaturated fatty acyl chain (18:1 or 18:2) on the sn-2 position. Able to transfer phosphatidylcholine (PC) and phosphatidyetanolamline (PE) between membranes. This Homo sapiens (Human) protein is START domain-containing protein 10 (STARD10).